A 1364-amino-acid polypeptide reads, in one-letter code: DNA-directed RNA polymerase subunit beta (1364 aa).

This sequence belongs to the RNA polymerase beta chain family. As to quaternary structure, the RNAP catalytic core consists of 2 alpha, 1 beta, 1 beta' and 1 omega subunit. When a sigma factor is associated with the core the holoenzyme is formed, which can initiate transcription.

It catalyses the reaction RNA(n) + a ribonucleoside 5'-triphosphate = RNA(n+1) + diphosphate. Its function is as follows. DNA-dependent RNA polymerase catalyzes the transcription of DNA into RNA using the four ribonucleoside triphosphates as substrates. This chain is DNA-directed RNA polymerase subunit beta, found in Desulfatibacillum aliphaticivorans.